Reading from the N-terminus, the 966-residue chain is Regulator of telomere elongation helicase 1 homolog (966 aa).

One can recognise a Helicase ATP-binding domain in the interval 7 to 284 (AGIPVHFPFE…QDMAGDEPKD (278 aa)). 42-49 (SPTGTGKT) lines the ATP pocket. Residues Cys146, Cys164, Cys173, and Cys209 each coordinate [4Fe-4S] cluster. The DEAH box motif lies at 233–236 (DEAH). Positions 844 to 864 (VKIHKRERSSPTAPESTSQVS) are disordered. Positions 853 to 863 (SPTAPESTSQV) are enriched in polar residues. Thr855 is subject to Phosphothreonine.

Belongs to the helicase family. RAD3/XPD subfamily.

It localises to the nucleus. The catalysed reaction is ATP + H2O = ADP + phosphate + H(+). Its function is as follows. A probable ATP-dependent DNA helicase implicated in DNA repair and the maintenance of genomic stability. Acts as an anti-recombinase to counteract toxic recombination and limit crossover during meiosis. Regulates meiotic recombination and crossover homeostasis by physically dissociating strand invasion events and thereby promotes noncrossover repair by meiotic synthesis dependent strand annealing (SDSA) as well as disassembly of D loop recombination intermediates. This Drosophila sechellia (Fruit fly) protein is Regulator of telomere elongation helicase 1 homolog.